Reading from the N-terminus, the 462-residue chain is Sugar transporter ERD6-like 2 (462 aa).

12 helical membrane-spanning segments follow: residues 23–43, 70–90, 96–116, 123–143, 156–176, 178–198, 261–281, 296–316, 324–344, 357–377, 397–417, and 423–443; these read SGLLLSTSVVVAGSFCYGCAM, VMTLGGMITAVFSGKISALVG, WISDVCCIFGWLAVAFAHDII, LFLGFGVGLISYVVPVYIAEI, NQLLQCLGISLMFFTGNFFHW, TLALLSAIPSAFQVICLFFIP, LIIGLGLMLLQQFCGSAAISA, IGTTILAVILIPQSIVVMLTV, LLMISSIGMCICSFFIGLSYY, VMLIVGLVGYVSSFGIGLGGL, LVTMSNWFFNWIIIYSFNFMI, and GTYFIFSGVSLVTIVFIWTLV.

This sequence belongs to the major facilitator superfamily. Sugar transporter (TC 2.A.1.1) family.

It is found in the membrane. Its function is as follows. Sugar transporter. The polypeptide is Sugar transporter ERD6-like 2 (SUGTL3) (Arabidopsis thaliana (Mouse-ear cress)).